A 176-amino-acid polypeptide reads, in one-letter code: Ribosome maturation factor RimM (176 aa).

The 74-residue stretch at 93 to 166 folds into the PRC barrel domain; it reads ADEYYHADLI…QVVIEPPNEI (74 aa).

This sequence belongs to the RimM family. Binds ribosomal protein uS19.

The protein localises to the cytoplasm. Its function is as follows. An accessory protein needed during the final step in the assembly of 30S ribosomal subunit, possibly for assembly of the head region. Essential for efficient processing of 16S rRNA. May be needed both before and after RbfA during the maturation of 16S rRNA. It has affinity for free ribosomal 30S subunits but not for 70S ribosomes. The polypeptide is Ribosome maturation factor RimM (Rhodopseudomonas palustris (strain ATCC BAA-98 / CGA009)).